A 66-amino-acid polypeptide reads, in one-letter code: Large ribosomal subunit protein bL35 (66 aa).

The protein belongs to the bacterial ribosomal protein bL35 family.

The chain is Large ribosomal subunit protein bL35 from Parvibaculum lavamentivorans (strain DS-1 / DSM 13023 / NCIMB 13966).